Reading from the N-terminus, the 618-residue chain is Probable Xaa-Pro aminopeptidase P (618 aa).

Residues Asp-414, Asp-425, Glu-523, and Glu-537 each coordinate Mn(2+).

This sequence belongs to the peptidase M24B family. The cofactor is Mn(2+).

The enzyme catalyses Release of any N-terminal amino acid, including proline, that is linked to proline, even from a dipeptide or tripeptide.. In terms of biological role, catalyzes the removal of a penultimate prolyl residue from the N-termini of peptides. This Metarhizium acridum (strain CQMa 102) protein is Probable Xaa-Pro aminopeptidase P (AMPP).